Here is a 212-residue protein sequence, read N- to C-terminus: Kynurenine formamidase (212 aa).

Position 18 (Trp18) interacts with substrate. 3 residues coordinate Zn(2+): His48, His52, and Asp54. The active-site Proton donor/acceptor is the His58. The Zn(2+) site is built by His160 and Glu172.

This sequence belongs to the Cyclase 1 superfamily. KynB family. Homodimer. Requires Zn(2+) as cofactor.

It catalyses the reaction N-formyl-L-kynurenine + H2O = L-kynurenine + formate + H(+). The protein operates within amino-acid degradation; L-tryptophan degradation via kynurenine pathway; L-kynurenine from L-tryptophan: step 2/2. Functionally, catalyzes the hydrolysis of N-formyl-L-kynurenine to L-kynurenine, the second step in the kynurenine pathway of tryptophan degradation. The protein is Kynurenine formamidase of Paraburkholderia phytofirmans (strain DSM 17436 / LMG 22146 / PsJN) (Burkholderia phytofirmans).